Here is a 284-residue protein sequence, read N- to C-terminus: 3-methyl-2-oxobutanoate hydroxymethyltransferase (284 aa).

Mg(2+)-binding residues include Asp52 and Asp91. Residues 52 to 53, Asp91, and Lys121 contribute to the 3-methyl-2-oxobutanoate site; that span reads DS. Residue Glu123 coordinates Mg(2+). Glu191 acts as the Proton acceptor in catalysis.

This sequence belongs to the PanB family. As to quaternary structure, homodecamer; pentamer of dimers. Mg(2+) is required as a cofactor.

It localises to the cytoplasm. It catalyses the reaction 3-methyl-2-oxobutanoate + (6R)-5,10-methylene-5,6,7,8-tetrahydrofolate + H2O = 2-dehydropantoate + (6S)-5,6,7,8-tetrahydrofolate. It functions in the pathway cofactor biosynthesis; (R)-pantothenate biosynthesis; (R)-pantoate from 3-methyl-2-oxobutanoate: step 1/2. Catalyzes the reversible reaction in which hydroxymethyl group from 5,10-methylenetetrahydrofolate is transferred onto alpha-ketoisovalerate to form ketopantoate. This is 3-methyl-2-oxobutanoate hydroxymethyltransferase from Deinococcus radiodurans (strain ATCC 13939 / DSM 20539 / JCM 16871 / CCUG 27074 / LMG 4051 / NBRC 15346 / NCIMB 9279 / VKM B-1422 / R1).